A 254-amino-acid polypeptide reads, in one-letter code: Nickel import ATP-binding protein NikD (254 aa).

An ABC transporter domain is found at 2-241 (PQQIELRNIA…PKHAVTRSLV (240 aa)). 36-43 (GGSGSGKS) is an ATP binding site.

Belongs to the ABC transporter superfamily. Nickel importer (TC 3.A.1.5.3) family. As to quaternary structure, the complex is composed of two ATP-binding proteins (NikD and NikE), two transmembrane proteins (NikB and NikC) and a solute-binding protein (NikA).

Its subcellular location is the cell inner membrane. It carries out the reaction Ni(2+)(out) + ATP + H2O = Ni(2+)(in) + ADP + phosphate + H(+). In terms of biological role, part of the ABC transporter complex NikABCDE involved in nickel import. Responsible for energy coupling to the transport system. In Shigella sonnei (strain Ss046), this protein is Nickel import ATP-binding protein NikD.